An 827-amino-acid chain; its full sequence is MTFCYPCRAFALLTRGFTSFMSGWPRIYYKLLNLPLSILVKSKSIPADPAPELGLDTSRPIMYVLPYNSKADLLTLRAQCLAHDLPDPLEPLEIDGTLLPRYVFIHGGPRVFTYYTPKEESIKLFHDYLDLHRSNPNLDVQMVPVSVMFGRAPGREKGEVNPPLRMLNGVQKFFAVLWLGRDSFVRFSPSVSLRRMADEHGTDKTIAQKLARVARMHFARQRLAAVGPRLPARQDLFNKLLASRAIAKAVEDEARSKKISHEKAQQNAIVLMEEIAANFSYEMIRLTDRILGFTWNRLYQGINVHNAERVRQLAHDGHELVYVPCHRSHMDYLLLSYVLYHQGLVPPHIAAGINLNFWPAGPIFRRLGAFFIRRTFKGNKLYSTVFREYLGELFSRGYSVEYFVEGGRSRTGRLLDPKTGTLSMTIQAMLRGGTRPITLIPIYIGYEHVMEVGTYAKELRGATKEKESLPQMLRGLSKLRNLGQGYVNFGEPMPLMTYLNQHVPDWRESIDPIEAVRPAWLTPTVNNIAADLMVRINNAGAANAMNLCCTALLASRQRSLTREQLTEQLNCYLDLMRNVPYSTDSTVPSASASELIDHALQMNKFEVEKDTIGDIIILPREQAVLMTYYRNNIAHMLVLPSLMAAIVTQHRHISRDVLMEHVNVLYPMLKAELFLRWDRDELPDVIDALANEMQRQGLITLQDDELHINPAHSRTLQLLAAGARETLQRYAITFWLLSANPSINRGTLEKESRTVAQRLSVLHGINAPEFFDKAVFSSLVLTLRDEGYISDSGDAEPAETMKVYQLLAELITSDVRLTIESATQGEG.

The HXXXXD motif signature appears at 325-330 (CHRSHM).

It belongs to the GPAT/DAPAT family.

The protein resides in the cell inner membrane. It carries out the reaction sn-glycerol 3-phosphate + an acyl-CoA = a 1-acyl-sn-glycero-3-phosphate + CoA. The protein operates within phospholipid metabolism; CDP-diacylglycerol biosynthesis; CDP-diacylglycerol from sn-glycerol 3-phosphate: step 1/3. The polypeptide is Glycerol-3-phosphate acyltransferase (Escherichia coli (strain SMS-3-5 / SECEC)).